Here is a 256-residue protein sequence, read N- to C-terminus: Major prion protein (256 aa).

The first 24 residues, 1–24 (MVKSHIGSWILVLFVAMWSDVGLC), serve as a signal peptide directing secretion. The interval 25–233 (KKRPKPGGGW…ESQAYYQRGA (209 aa)) is interaction with GRB2, ERI3 and SYN1. The interval 28 to 110 (PKPGGGWNTG…QWNKPSKPKT (83 aa)) is disordered. 5 repeat units span residues 54–62 (PQGGGGWGQ), 63–70 (PHGGGWGQ), 71–78 (PHGGGWGQ), 79–86 (PHGGGWGQ), and 87–95 (PHGGGGWGQ). Residues 54–95 (PQGGGGWGQPHGGGWGQPHGGGWGQPHGGGWGQPHGGGGWGQ) form a 5 X 8 AA tandem repeats of P-H-G-G-G-W-G-Q region. The segment covering 55–97 (QGGGGWGQPHGGGWGQPHGGGWGQPHGGGWGQPHGGGGWGQGG) has biased composition (gly residues). The Cu(2+) site is built by histidine 64, glycine 65, glycine 66, histidine 72, glycine 73, glycine 74, histidine 80, glycine 81, glycine 82, histidine 88, glycine 90, and glycine 91. A disulfide bridge links cysteine 182 with cysteine 217. N-linked (GlcNAc...) asparagine glycosylation is found at asparagine 184 and asparagine 200. Alanine 233 carries GPI-anchor amidated alanine lipidation. The propeptide at 234–256 (SVILFSSPPVILLISFLIFLIVG) is removed in mature form.

It belongs to the prion family. As to quaternary structure, monomer and homodimer. Has a tendency to aggregate into amyloid fibrils containing a cross-beta spine, formed by a steric zipper of superposed beta-strands. Soluble oligomers may represent an intermediate stage on the path to fibril formation. Copper binding may promote oligomerization. Interacts with GRB2, APP, ERI3/PRNPIP and SYN1. Mislocalized cytosolically exposed PrP interacts with MGRN1; this interaction alters MGRN1 subcellular location and causes lysosomal enlargement. Interacts with KIAA1191.

It is found in the cell membrane. The protein resides in the golgi apparatus. Functionally, its primary physiological function is unclear. Has cytoprotective activity against internal or environmental stresses. May play a role in neuronal development and synaptic plasticity. May be required for neuronal myelin sheath maintenance. May play a role in iron uptake and iron homeostasis. Soluble oligomers are toxic to cultured neuroblastoma cells and induce apoptosis (in vitro). Association with GPC1 (via its heparan sulfate chains) targets PRNP to lipid rafts. Also provides Cu(2+) or Zn(2+) for the ascorbate-mediated GPC1 deaminase degradation of its heparan sulfate side chains. The chain is Major prion protein (PRNP) from Budorcas taxicolor (Golden takin).